The sequence spans 162 residues: Phosphopantetheine adenylyltransferase (162 aa).

Threonine 9 serves as a coordination point for substrate. Residues 9–10 (TF) and histidine 17 each bind ATP. Substrate-binding residues include lysine 41, leucine 77, and arginine 91. ATP is bound by residues 92–94 (GLR), glutamate 102, and 127–133 (RQAIASK).

This sequence belongs to the bacterial CoaD family. As to quaternary structure, homohexamer. Mg(2+) is required as a cofactor.

The protein localises to the cytoplasm. The enzyme catalyses (R)-4'-phosphopantetheine + ATP + H(+) = 3'-dephospho-CoA + diphosphate. Its pathway is cofactor biosynthesis; coenzyme A biosynthesis; CoA from (R)-pantothenate: step 4/5. In terms of biological role, reversibly transfers an adenylyl group from ATP to 4'-phosphopantetheine, yielding dephospho-CoA (dPCoA) and pyrophosphate. The chain is Phosphopantetheine adenylyltransferase from Cereibacter sphaeroides (strain ATCC 17029 / ATH 2.4.9) (Rhodobacter sphaeroides).